We begin with the raw amino-acid sequence, 459 residues long: 1,3-beta-glucanosyltransferase gas2 (459 aa).

A signal peptide spans 1–19 (MVSFTKFTLQLLSASAAFA). N34 and N68 each carry an N-linked (GlcNAc...) asparagine glycan. C69 and C98 are joined by a disulfide. Y87 is a binding site for (1,3-beta-D-glucosyl)n. Residues N90, N104, and N146 are each glycosylated (N-linked (GlcNAc...) asparagine). 2 residues coordinate (1,3-beta-D-glucosyl)n: N155 and E156. E156 functions as the Proton donor in the catalytic mechanism. A glycan (N-linked (GlcNAc...) asparagine) is linked at N160. The (1,3-beta-D-glucosyl)n site is built by D197 and R202. 2 disulfide bridges follow: C211–C350 and C235–C266. N-linked (GlcNAc...) asparagine glycans are attached at residues N212, N218, and N254. Residue E263 is the Nucleophile of the active site. N284 carries an N-linked (GlcNAc...) asparagine glycan. A (1,3-beta-D-glucosyl)n-binding site is contributed by Y295. N-linked (GlcNAc...) asparagine glycosylation is found at N308, N334, N344, N354, and N370. Intrachain disulfides connect C374-C427, C383-C449, and C402-C409. A glycan (N-linked (GlcNAc...) asparagine) is linked at N423.

Belongs to the glycosyl hydrolase 72 family.

The protein resides in the endoplasmic reticulum lumen. The protein localises to the secreted. Its function is as follows. Splits internally a 1,3-beta-glucan molecule and transfers the newly generated reducing end (the donor) to the non-reducing end of another 1,3-beta-glucan molecule (the acceptor) forming a 1,3-beta linkage, resulting in the elongation of 1,3-beta-glucan chains in the cell wall. This is 1,3-beta-glucanosyltransferase gas2 (gas2) from Schizosaccharomyces pombe (strain 972 / ATCC 24843) (Fission yeast).